The sequence spans 342 residues: Sideroflexin-5 (342 aa).

Residues 1–24 (MADTATTASAASAAASASNASSDA) are compositionally biased toward low complexity. A disordered region spans residues 1 to 29 (MADTATTASAASAAASASNASSDAPPFQL). Transmembrane regions (helical) follow at residues 105-125 (IFMPFRMSGYIPFGTPIVVGL), 165-185 (FIQGYLGAVISAVSIAVGLNV), 256-276 (LTRVVLPMPILVLPPIVMSML), and 289-309 (LLPVHSLVCLAAFGLALPLAI).

It belongs to the sideroflexin family. In terms of tissue distribution, specifically expressed in the brain.

It localises to the mitochondrion inner membrane. It carries out the reaction citrate(in) = citrate(out). Functionally, mitochondrial amino-acid transporter. Transports citrate. Does not act as a serine transporter: not able to mediate transport of serine into mitochondria. In brown adipose tissue, plays a role in the regulation of UCP1-dependent thermogenesis probably by supporting mitochondrial glycerol-3-phosphate utilization. The polypeptide is Sideroflexin-5 (Rattus norvegicus (Rat)).